A 366-amino-acid chain; its full sequence is DNA-directed RNA polymerase subunit alpha (366 aa).

The segment at 1-260 (MAISDNGGGS…DQLQSFIGSE (260 aa)) is alpha N-terminal domain (alpha-NTD). Positions 274-366 (EGALPYDHNL…ENLSKQYSED (93 aa)) are alpha C-terminal domain (alpha-CTD).

The protein belongs to the RNA polymerase alpha chain family. Homodimer. The RNAP catalytic core consists of 2 alpha, 1 beta, 1 beta' and 1 omega subunit. When a sigma factor is associated with the core the holoenzyme is formed, which can initiate transcription.

The enzyme catalyses RNA(n) + a ribonucleoside 5'-triphosphate = RNA(n+1) + diphosphate. In terms of biological role, DNA-dependent RNA polymerase catalyzes the transcription of DNA into RNA using the four ribonucleoside triphosphates as substrates. The sequence is that of DNA-directed RNA polymerase subunit alpha from Anaplasma marginale (strain St. Maries).